Reading from the N-terminus, the 413-residue chain is CinA-like protein (413 aa).

This sequence belongs to the CinA family.

The chain is CinA-like protein from Desulfotalea psychrophila (strain LSv54 / DSM 12343).